The following is a 148-amino-acid chain: Receptor activity-modifying protein 3 (148 aa).

An N-terminal signal peptide occupies residues methionine 1–proline 23. Residues arginine 24–aspartate 113 are Extracellular-facing. N-linked (GlcNAc...) asparagine glycans are attached at residues asparagine 29, asparagine 58, asparagine 71, and asparagine 103. 2 cysteine pairs are disulfide-bonded: cysteine 40-cysteine 72 and cysteine 57-cysteine 104. A helical transmembrane segment spans residues proline 114–valine 138. The Cytoplasmic portion of the chain corresponds to tryptophan 139–leucine 148.

This sequence belongs to the RAMP family. Heterodimer of CALCRL and RAMP3; interaction induces allosteric modulation of CALCRL function and ligand specificity for adrenomedullin/ADM and intermedin/ADM2. Heterodimer of CALCR and RAMP3; interaction form the receptor complex AMYR3 for amylin/IAPP. Interacts with GPER1. Strongly expressed in lung, breast, immune system and fetal tissues.

It localises to the cell membrane. It is found in the membrane. Functionally, accessory protein that interacts with and modulates the function of G-protein coupled receptors including calcitonin gene-related peptide type 1 receptor (CALCRL), calcitonin receptor (CALCR) and G-protein coupled estrogen receptor 1 (GPER1). Required for the transport of CALCRL and GPER1 receptors to the plasma membrane. Plays a role in cardioprotection by reducing cardiac hypertrophy and perivascular fibrosis in a GPER1-dependent manner. Together with CALCRL, form a receptor complex for adrenomedullin/ADM and intermedin/ADM2. Together with CALCR, act as a receptor complex for amylin/IAPP. The chain is Receptor activity-modifying protein 3 from Homo sapiens (Human).